Consider the following 468-residue polypeptide: Peroxisome proliferator-activated receptor alpha (468 aa).

A DNA-binding region (nuclear receptor) is located at residues 99–173 (NIECRICGDK…VGMSHNAIRF (75 aa)). 2 NR C4-type zinc fingers span residues 102-122 (CRIC…CEGC) and 139-161 (CDRS…FHKC). An NR LBD domain is found at 239 to 466 (FVIHDMETLC…HPLLQEIYRD (228 aa)). The required for heterodimerization with RXRA stretch occupies residues 304–433 (DQVTLLKYGV…PKLLQKMVDL (130 aa)).

This sequence belongs to the nuclear hormone receptor family. NR1 subfamily. Heterodimer; with RXRA. This heterodimerization is required for DNA binding and transactivation activity. Interacts with NCOA3 coactivator. Interacts with CITED2; the interaction stimulates its transcriptional activity. Also interacts with PPARBP in vitro. Interacts with AKAP13, LPIN1, PRDM16 and coactivator NCOA6. Interacts with ASXL1 and ASXL2. Interacts with PER2. Interacts with SIRT1; the interaction seems to be modulated by NAD(+) levels. Interacts with CRY1 and CRY2. In hepatocytes, interacts with PAQR3 and HUWE1; the interactions promote PPARA poylubiquitination and HUWE1-mediated degradation. In terms of processing, ubiquitinated by E3 ubiquitin-protein ligase HUWE1; leading to proteasomal degradation. Phosphorylated. In terms of tissue distribution, highly expressed in liver, kidney and heart. Very weakly expressed in brain and testis.

Its subcellular location is the nucleus. Functionally, ligand-activated transcription factor. Key regulator of lipid metabolism. Activated by the endogenous ligand 1-palmitoyl-2-oleoyl-sn-glycerol-3-phosphocholine (16:0/18:1-GPC). Activated by oleylethanolamide, a naturally occurring lipid that regulates satiety. Receptor for peroxisome proliferators such as hypolipidemic drugs and fatty acids. Regulates the peroxisomal beta-oxidation pathway of fatty acids. Functions as a transcription activator for the ACOX1 and P450 genes. Transactivation activity requires heterodimerization with RXRA and is antagonized by NR2C2. May be required for the propagation of clock information to metabolic pathways regulated by PER2. The sequence is that of Peroxisome proliferator-activated receptor alpha (Ppara) from Mus musculus (Mouse).